Reading from the N-terminus, the 172-residue chain is Inorganic pyrophosphatase (172 aa).

3 residues coordinate substrate: Lys-29, Arg-43, and Tyr-55. Asp-65, Asp-70, and Asp-102 together coordinate Mg(2+). Tyr-141 is a binding site for substrate.

Belongs to the PPase family. In terms of assembly, homohexamer. Requires Mg(2+) as cofactor.

The protein localises to the cytoplasm. The catalysed reaction is diphosphate + H2O = 2 phosphate + H(+). Functionally, catalyzes the hydrolysis of inorganic pyrophosphate (PPi) forming two phosphate ions. The polypeptide is Inorganic pyrophosphatase (Rickettsia prowazekii (strain Madrid E)).